A 173-amino-acid polypeptide reads, in one-letter code: Adenine phosphoribosyltransferase (173 aa).

Belongs to the purine/pyrimidine phosphoribosyltransferase family. In terms of assembly, homodimer.

The protein resides in the cytoplasm. The enzyme catalyses AMP + diphosphate = 5-phospho-alpha-D-ribose 1-diphosphate + adenine. The protein operates within purine metabolism; AMP biosynthesis via salvage pathway; AMP from adenine: step 1/1. In terms of biological role, catalyzes a salvage reaction resulting in the formation of AMP, that is energically less costly than de novo synthesis. This is Adenine phosphoribosyltransferase from Chloroflexus aurantiacus (strain ATCC 29366 / DSM 635 / J-10-fl).